We begin with the raw amino-acid sequence, 81 residues long: WAP four-disulfide core domain protein 13 (81 aa).

Residues 1 to 22 (MRPVSPLQLLLVLSLAPQPVLG) form the signal peptide. Residues 31 to 74 (YILEPPPCRSEPGACNMFCTQQEECPEPLQCCSAYCGIVCTSNQ) form the WAP domain. Cystine bridges form between cysteine 38/cysteine 62, cysteine 45/cysteine 66, cysteine 49/cysteine 61, and cysteine 55/cysteine 70.

It is found in the secreted. In terms of biological role, putative acid-stable proteinase inhibitor. This is WAP four-disulfide core domain protein 13 (Wfdc13) from Mus musculus (Mouse).